We begin with the raw amino-acid sequence, 1357 residues long: DNA-directed RNA polymerase subunit beta (1357 aa).

The protein belongs to the RNA polymerase beta chain family. As to quaternary structure, the RNAP catalytic core consists of 2 alpha, 1 beta, 1 beta' and 1 omega subunit. When a sigma factor is associated with the core the holoenzyme is formed, which can initiate transcription.

The enzyme catalyses RNA(n) + a ribonucleoside 5'-triphosphate = RNA(n+1) + diphosphate. Functionally, DNA-dependent RNA polymerase catalyzes the transcription of DNA into RNA using the four ribonucleoside triphosphates as substrates. This chain is DNA-directed RNA polymerase subunit beta, found in Pseudomonas fluorescens (strain Pf0-1).